The following is a 494-amino-acid chain: Adenosylhomocysteinase (494 aa).

Residues Thr72, Asp155, and Glu217 each coordinate substrate. 218–220 (TTT) serves as a coordination point for NAD(+). Positions 247 and 251 each coordinate substrate. Residues Asn252, 281-286 (GYGDVG), Glu304, Asn339, 360-362 (IGH), and Asn408 contribute to the NAD(+) site.

This sequence belongs to the adenosylhomocysteinase family. Requires NAD(+) as cofactor.

The protein localises to the cytoplasm. The enzyme catalyses S-adenosyl-L-homocysteine + H2O = L-homocysteine + adenosine. The protein operates within amino-acid biosynthesis; L-homocysteine biosynthesis; L-homocysteine from S-adenosyl-L-homocysteine: step 1/1. May play a key role in the regulation of the intracellular concentration of adenosylhomocysteine. The chain is Adenosylhomocysteinase from Nocardia farcinica (strain IFM 10152).